Consider the following 499-residue polypeptide: Protein adenylyltransferase Fic (499 aa).

The chain crosses the membrane as a helical span at residues 38 to 58 (FHYFVIFASGSLFSGLMFGLL). TPR repeat units lie at residues 126 to 159 (ALSS…SPKH) and 160 to 194 (PEIL…NPSH). Residues 251-256 (SVGIEG) carry the Inhibitory (S/T)XXXE(G/N) motif motif. ATP is bound by residues glutamate 255 and 337–340 (VGGH). Residues 306 to 441 (ITLKDILEIH…IRPFVRFIAD (136 aa)) form the Fido domain. The active site involves histidine 384. ATP contacts are provided by residues 388–395 (DGNGRTSR), 420–421 (YY), and asparagine 428.

The protein belongs to the fic family. In terms of assembly, homodimer.

The protein resides in the membrane. The catalysed reaction is L-tyrosyl-[protein] + ATP = O-(5'-adenylyl)-L-tyrosyl-[protein] + diphosphate. It carries out the reaction L-threonyl-[protein] + ATP = 3-O-(5'-adenylyl)-L-threonyl-[protein] + diphosphate. It catalyses the reaction 3-O-(5'-adenylyl)-L-threonyl-[protein] + H2O = L-threonyl-[protein] + AMP + H(+). The side chain of Glu-255 determines which of the two opposing activities (AMPylase or de-AMPylase) will take place. In response to endoplasmic reticulum stress, mediates de-AMPylase activity. Adenylyltransferase activity is inhibited by the inhibitory helix present at the N-terminus: Glu-255 binds ATP and competes with ATP-binding at Arg-395, thereby preventing adenylyltransferase activity. In unstressed cells, disengagement of Glu-255 promotes adenylyltransferase activity. Activation dissociates ATP-binding from Glu-255, allowing ordered binding of the entire ATP moiety with the alpha-phosphate in an orientation that is productive for accepting an incoming target hydroxyl side chain. Functionally, protein that can both mediate the addition of adenosine 5'-monophosphate (AMP) to specific residues of target proteins (AMPylation), and the removal of the same modification from target proteins (de-AMPylation), depending on the context. The side chain of Glu-255 determines which of the two opposing activities (AMPylase or de-AMPylase) will take place. Acts as a key regulator of the unfolded protein response (UPR) by mediating AMPylation or de-AMPylation of Hsc70-3/BiP. In unstressed cells, acts as an adenylyltransferase by mediating AMPylation of Hsc70-3/BiP at 'Thr-518', thereby inactivating it. In response to endoplasmic reticulum stress, acts as a phosphodiesterase by mediating removal of ATP (de-AMPylation) from Hsc70-3/BiP at 'Thr-518', leading to restore HSPA5/BiP activity. The chain is Protein adenylyltransferase Fic from Aedes aegypti (Yellowfever mosquito).